A 161-amino-acid polypeptide reads, in one-letter code: Lipoprotein signal peptidase (161 aa).

2 helical membrane-spanning segments follow: residues 64 to 84 and 92 to 114; these read YRVP…AWFY and VLGR…DRVR. Residues Asp120 and Asp138 contribute to the active site. The helical transmembrane segment at 131–151 threads the bilayer; the sequence is WPAFNVADSAICVGVGMLLLA.

It belongs to the peptidase A8 family.

It localises to the cell inner membrane. It carries out the reaction Release of signal peptides from bacterial membrane prolipoproteins. Hydrolyzes -Xaa-Yaa-Zaa-|-(S,diacylglyceryl)Cys-, in which Xaa is hydrophobic (preferably Leu), and Yaa (Ala or Ser) and Zaa (Gly or Ala) have small, neutral side chains.. It functions in the pathway protein modification; lipoprotein biosynthesis (signal peptide cleavage). This protein specifically catalyzes the removal of signal peptides from prolipoproteins. The polypeptide is Lipoprotein signal peptidase (Syntrophotalea carbinolica (strain DSM 2380 / NBRC 103641 / GraBd1) (Pelobacter carbinolicus)).